Here is a 260-residue protein sequence, read N- to C-terminus: Histidine-binding periplasmic protein (260 aa).

An N-terminal signal peptide occupies residues 1–22 (MKKLVLSLSLVLAFSSATAAFA). Cysteines 60 and 67 form a disulfide. Residues S91, S92, S94, R99, T143, and D183 each coordinate L-histidine.

This sequence belongs to the bacterial solute-binding protein 3 family. As to quaternary structure, the complex is composed of two ATP-binding proteins (HisP), two transmembrane proteins (HisM and HisQ) and a solute-binding protein (HisJ).

It localises to the periplasm. Functionally, part of the ABC transporter complex HisPMQJ involved in histidine transport. Binds histidine. Interacts with HisQMP and stimulates ATPase activity of HisP, which results in histidine translocation. The chain is Histidine-binding periplasmic protein (hisJ) from Escherichia coli O157:H7.